The following is a 391-amino-acid chain: Heme A synthase (391 aa).

8 helical membrane passes run 37–57 (IRLW…VGGL), 121–141 (RQLG…FLAA), 152–172 (LLAL…MVAS), 186–206 (LATH…QALL), 229–249 (TTVL…VAGI), 298–318 (FLHR…WIFG), 332–352 (LLAM…LSAA), and 354–374 (WQVA…ILHA). Histidine 300 is a binding site for heme. Histidine 360 provides a ligand contact to heme.

The protein belongs to the COX15/CtaA family. Type 2 subfamily. Interacts with CtaB. It depends on heme b as a cofactor.

The protein localises to the cell membrane. The catalysed reaction is Fe(II)-heme o + 2 A + H2O = Fe(II)-heme a + 2 AH2. It functions in the pathway porphyrin-containing compound metabolism; heme A biosynthesis; heme A from heme O: step 1/1. In terms of biological role, catalyzes the conversion of heme O to heme A by two successive hydroxylations of the methyl group at C8. The first hydroxylation forms heme I, the second hydroxylation results in an unstable dihydroxymethyl group, which spontaneously dehydrates, resulting in the formyl group of heme A. The chain is Heme A synthase from Cereibacter sphaeroides (strain ATCC 17029 / ATH 2.4.9) (Rhodobacter sphaeroides).